Here is a 1087-residue protein sequence, read N- to C-terminus: DNA polymerase II large subunit (1087 aa).

This sequence belongs to the archaeal DNA polymerase II family. As to quaternary structure, heterodimer of a large subunit and a small subunit.

It carries out the reaction DNA(n) + a 2'-deoxyribonucleoside 5'-triphosphate = DNA(n+1) + diphosphate. The enzyme catalyses Exonucleolytic cleavage in the 3'- to 5'-direction to yield nucleoside 5'-phosphates.. Its function is as follows. Possesses two activities: a DNA synthesis (polymerase) and an exonucleolytic activity that degrades single-stranded DNA in the 3'- to 5'-direction. Has a template-primer preference which is characteristic of a replicative DNA polymerase. The chain is DNA polymerase II large subunit (polC) from Thermoplasma acidophilum (strain ATCC 25905 / DSM 1728 / JCM 9062 / NBRC 15155 / AMRC-C165).